Here is a 338-residue protein sequence, read N- to C-terminus: MKVLVALSGGVDSSMSAKYLLEAGYSVVGCYMKLHSKPGYHEENIRKVKKVGEFLGIETHILDLEEEFNAKVYEPFVNAYKEGLTPNPCAHCNKNIKFGALWKFAQTLGCDKMATGHYARIEDGLIKVASDLSKDQSYFLANISPEILPYIIFPLGDKFKVDIKAAAAQIPQIAELASQKESSEICFVETTYIDILNKHFNTLMPGVVRDVSGKVVGKHDGYMRYTIGKRKGFSVDGAHSPHYVLKIDAAKNEIVVGLKDELSSFSFTTTNFNNFTDKNELECFVKIRYRSTPIPCLVSKLDDGATVKLKDNAGGVASGQLAVFYDEFDRVLASGFIR.

ATP-binding positions include 6–13 (ALSGGVDS) and Met-32. Cys-92 (nucleophile) is an active-site residue. Residues Cys-92 and Cys-186 are joined by a disulfide bond. Gly-116 serves as a coordination point for ATP. Residues 134–136 (KDQ) form an interaction with tRNA region. Catalysis depends on Cys-186, which acts as the Cysteine persulfide intermediate. The interaction with tRNA stretch occupies residues 288–289 (RY).

The protein belongs to the MnmA/TRMU family.

It is found in the cytoplasm. It carries out the reaction S-sulfanyl-L-cysteinyl-[protein] + uridine(34) in tRNA + AH2 + ATP = 2-thiouridine(34) in tRNA + L-cysteinyl-[protein] + A + AMP + diphosphate + H(+). In terms of biological role, catalyzes the 2-thiolation of uridine at the wobble position (U34) of tRNA, leading to the formation of s(2)U34. This Campylobacter fetus subsp. fetus (strain 82-40) protein is tRNA-specific 2-thiouridylase MnmA.